A 344-amino-acid polypeptide reads, in one-letter code: MDHEADAYRTDLMTITRYVLNEQSRNPEARGDLTILLSHIVLGCKFVASAVNKAGLAKLIGLAGETNVQGEEQKKLDVLSNEVFVKALVSSGRTCVLVSEEDEEATFVDPALRGKYCVCFDPLDGSSNIDCGVSIGTIFGIYMIKDKDNVTLEDVLQPGKNMVAAGYCMYGSSCTLVLSTGNGVNGFTLDPSLGEFILTHPDIKIPKKGKIYSVNEGNAKNWDEPTAKFVEKCKFPKDGSSPKSLRYIGSMVADVHRTLLYGGVFLYPADKKSPNGKLRVLYEVFPMSFLMEQAGGQSFTGKERALDLVPTKIHERSPIFLGSFEDVEEIKGLYAAQAKLEHNH.

Mg(2+)-binding residues include E71, E100, D121, L123, and D124. Substrate contacts are provided by residues D124–S127, N215, Y247, Y267, and K277. Position 283 (E283) interacts with Mg(2+).

Belongs to the FBPase class 1 family. The cofactor is Mg(2+).

It is found in the cytoplasm. The catalysed reaction is beta-D-fructose 1,6-bisphosphate + H2O = beta-D-fructose 6-phosphate + phosphate. The chain is Fructose-1,6-bisphosphatase, cytosolic from Oryza coarctata (Wild rice).